The following is a 464-amino-acid chain: Cyclic 2,3-diphosphoglycerate synthetase (464 aa).

Belongs to the cyclic 2,3-diphosphoglycerate synthetase family.

It localises to the cytoplasm. It catalyses the reaction (2R)-2,3-bisphosphoglycerate + ATP + H(+) = cyclic (2R)-2,3-bisphosphoglycerate + ADP + phosphate. With respect to regulation, activity decreases in response to phosphate limitation. Catalyzes the formation of cyclic 2,3-diphosphoglycerate (cDPG) by formation of an intramolecular phosphoanhydride bond at the expense of ATP. Not able to catalyze cDPG hydrolysis. May be involved in osmotic balance. In Methanothermobacter thermautotrophicus (strain ATCC 29096 / DSM 1053 / JCM 10044 / NBRC 100330 / Delta H) (Methanobacterium thermoautotrophicum), this protein is Cyclic 2,3-diphosphoglycerate synthetase (cpgS).